A 158-amino-acid chain; its full sequence is 2-C-methyl-D-erythritol 2,4-cyclodiphosphate synthase (158 aa).

A divalent metal cation is bound by residues aspartate 9 and histidine 11. 4-CDP-2-C-methyl-D-erythritol 2-phosphate is bound by residues 9–11 and 35–36; these read DVH and HS. Histidine 43 contributes to the a divalent metal cation binding site. 4-CDP-2-C-methyl-D-erythritol 2-phosphate is bound by residues 57 to 59, 62 to 66, 133 to 136, phenylalanine 140, and arginine 143; these read DIG, FPDTD, and TTSE.

It belongs to the IspF family. As to quaternary structure, homotrimer. It depends on a divalent metal cation as a cofactor.

It carries out the reaction 4-CDP-2-C-methyl-D-erythritol 2-phosphate = 2-C-methyl-D-erythritol 2,4-cyclic diphosphate + CMP. It functions in the pathway isoprenoid biosynthesis; isopentenyl diphosphate biosynthesis via DXP pathway; isopentenyl diphosphate from 1-deoxy-D-xylulose 5-phosphate: step 4/6. Its function is as follows. Involved in the biosynthesis of isopentenyl diphosphate (IPP) and dimethylallyl diphosphate (DMAPP), two major building blocks of isoprenoid compounds. Catalyzes the conversion of 4-diphosphocytidyl-2-C-methyl-D-erythritol 2-phosphate (CDP-ME2P) to 2-C-methyl-D-erythritol 2,4-cyclodiphosphate (ME-CPP) with a corresponding release of cytidine 5-monophosphate (CMP). The sequence is that of 2-C-methyl-D-erythritol 2,4-cyclodiphosphate synthase from Pasteurella multocida (strain Pm70).